A 465-amino-acid chain; its full sequence is ATP synthase subunit beta (465 aa).

ATP is bound at residue 155–162 (GGAGVGKT).

Belongs to the ATPase alpha/beta chains family. F-type ATPases have 2 components, CF(1) - the catalytic core - and CF(0) - the membrane proton channel. CF(1) has five subunits: alpha(3), beta(3), gamma(1), delta(1), epsilon(1). CF(0) has three main subunits: a(1), b(2) and c(9-12). The alpha and beta chains form an alternating ring which encloses part of the gamma chain. CF(1) is attached to CF(0) by a central stalk formed by the gamma and epsilon chains, while a peripheral stalk is formed by the delta and b chains.

The protein localises to the cell membrane. The catalysed reaction is ATP + H2O + 4 H(+)(in) = ADP + phosphate + 5 H(+)(out). Functionally, produces ATP from ADP in the presence of a proton gradient across the membrane. The catalytic sites are hosted primarily by the beta subunits. The polypeptide is ATP synthase subunit beta (Buchnera aphidicola subsp. Baizongia pistaciae (strain Bp)).